The sequence spans 216 residues: Cytochrome c-type protein Cgr1 (216 aa).

Residues 18–38 traverse the membrane as a helical segment; that stretch reads WPIVVGVVVVVLIAAGAGFWV. Positions 46, 50, 51, 95, 98, 99, 142, 147, 148, 176, 179, 180, 190, 193, and 194 each coordinate heme.

This sequence belongs to the multiheme cytochrome c family. May form a membrane-associated complex with Cgr2. Post-translationally, binds 5 heme groups per subunit.

The protein localises to the cell membrane. Functionally, probably transfers electrons from a membrane-associated electron donor (e.g. the membrane quinone pool) to the [4Fe-4S] cluster of the Cgr2 reductase via its covalently bound heme groups. This chain is Cytochrome c-type protein Cgr1, found in Eggerthella lenta (strain ATCC 25559 / DSM 2243 / CCUG 17323 / JCM 9979 / KCTC 3265 / NCTC 11813 / VPI 0255 / 1899 B) (Eubacterium lentum).